We begin with the raw amino-acid sequence, 301 residues long: Thymidylate synthase (301 aa).

DUMP contacts are provided by residues arginine 38 and 163 to 164 (RR). Residue cysteine 183 is the Nucleophile of the active site. Residues 203–206 (RSGD), asparagine 214, and 244–246 (HIY) each bind dUMP. Position 206 (aspartate 206) interacts with (6R)-5,10-methylene-5,6,7,8-tetrahydrofolate. Position 300 (alanine 300) interacts with (6R)-5,10-methylene-5,6,7,8-tetrahydrofolate.

This sequence belongs to the thymidylate synthase family. In terms of assembly, homodimer.

The catalysed reaction is dUMP + (6R)-5,10-methylene-5,6,7,8-tetrahydrofolate = 7,8-dihydrofolate + dTMP. It participates in pyrimidine metabolism; dTTP biosynthesis. Catalyzes the reductive methylation of deoxyuridylate to thymidylate. This chain is Thymidylate synthase, found in Varicella-zoster virus (strain Dumas) (HHV-3).